Here is a 514-residue protein sequence, read N- to C-terminus: MSISSDEVNFLVYRYLQESGFSHSAFTFGIESHISQSNINGALVPPAALISIIQKGLQYVEAEVSINEDGTLFDGRPIESLSLIDAVMPDVVQTRQQAYRDKLAQQHAAAAAAAAAATNQQGSAKNGENTANGEENGAHTIANNHTDMMEVDGDVEIPSNKAVVLRGHESEVFICAWNPVSDLLASGSGDSTARIWNLSENSTSGPTQLVLRHCIREGGQDVPSNKDVTSLDWNSEGTLLATGSYDGFARIWTKDGNLASTLGQHKGPIFALKWNKKGNFILSAGVDKTTIIWDAHTGEAKQQFPFHSAPALDVDWQSNNTFASCSTDMCIHVCKLGQDRPIKTFQGHTNEVNAIKWDPTGNLLASCSDDMTLKIWSMKQDNCVHDLQAHNKEIYTIKWSPTGPGTNNPNANLMLASASFDSTVRLWDVDRGICIHTLTKHQEPVYSVAFSPDGRYLASGSFDKCVHIWNTQTGALVHSYRGTGGIFEVCWNAAGDKVGASASDGSVCVLDLRK.

Position 2 is an N-acetylserine (Ser2). The LisH domain occupies 4–36 (SSDEVNFLVYRYLQESGFSHSAFTFGIESHISQ). An F-box-like domain is found at 41–86 (GALVPPAALISIIQKGLQYVEAEVSINEDGTLFDGRPIESLSLIDA). N6-acetyllysine is present on Lys102. The interval 114 to 139 (AAAATNQQGSAKNGENTANGEENGAH) is disordered. Positions 124–135 (AKNGENTANGEE) are enriched in low complexity. WD repeat units lie at residues 167-206 (GHES…TSGP), 223-262 (PSNK…ASTL), 264-303 (QHKG…AKQQ), 306-344 (FHSA…PIKT), 347-386 (GHTN…CVHD), 389-437 (AHNK…CIHT), 440-479 (KHQE…LVHS), and 481-513 (RGTG…LDLR). Lys277 participates in a covalent cross-link: Glycyl lysine isopeptide (Lys-Gly) (interchain with G-Cter in SUMO2).

It belongs to the WD repeat EBI family. Component of the N-Cor repressor complex, at least composed of NCOR1, NCOR2, HDAC3, TBL1X, TBL1XR1, CORO2A and GPS2. Probable component of some E3 ubiquitin ligase complex. Interacts with histones H2B and H4. Interacts with MECP2; bridges interaction between MECP2 and NCOR1. Interacts with USP44.

Its subcellular location is the nucleus. Functionally, F-box-like protein involved in the recruitment of the ubiquitin/19S proteasome complex to nuclear receptor-regulated transcription units. Plays an essential role in transcription activation mediated by nuclear receptors. Probably acts as integral component of the N-Cor corepressor complex that mediates the recruitment of the 19S proteasome complex, leading to the subsequent proteasomal degradation of N-Cor complex, thereby allowing cofactor exchange, and transcription activation. This Mus musculus (Mouse) protein is F-box-like/WD repeat-containing protein TBL1XR1 (Tbl1xr1).